The following is a 1210-amino-acid chain: A disintegrin and metalloproteinase with thrombospondin motifs 19 (1210 aa).

The N-terminal stretch at 1–30 (MGPEMRLTRICCCCCLLYQLGFLSHGTTSG) is a signal peptide. Residues 31–319 (LQLTPDLEEW…KIADNRREKR (289 aa)) constitute a propeptide that is removed on maturation. A glycan (N-linked (GlcNAc...) asparagine) is linked at N54. A disordered region spans residues 55–166 (ATGLSGGSSD…PAQQEEPSAE (112 aa)). The span at 69-78 (RSSGGGGRGQ) shows a compositional bias: gly residues. Over residues 84–98 (REVRSVARAPQEEAT) the composition is skewed to basic and acidic residues. Over residues 113 to 122 (GAEDEEELES) the composition is skewed to acidic residues. Positions 130 to 139 (SGDTALSSGT) are enriched in polar residues. Residues 143–158 (WQPPLPPQRPSSPPPA) show a composition bias toward pro residues. Residue N263 is glycosylated (N-linked (GlcNAc...) asparagine). The Cysteine switch motif lies at 295–302 (HHCGVISD). A Zn(2+)-binding site is contributed by C297. The 221-residue stretch at 328 to 548 (YNIETVVVAD…KASSCLLHTD (221 aa)) folds into the Peptidase M12B domain. Cystine bridges form between C404-C469, C444-C451, C463-C543, C502-C527, C572-C596, C583-C604, C591-C623, C617-C628, C648-C683, C652-C688, and C663-C673. Zn(2+) is bound at residue H485. E486 is a catalytic residue. 2 residues coordinate Zn(2+): H489 and H495. The region spanning 549–636 (PQSLSSVLVP…ECTRRTPAPE (88 aa)) is the Disintegrin domain. The TSP type-1 1 domain maps to 637-689 (HLAGEWSPWSSCSRSCSSGVSSRERKCPGLGSEARDCNGPRKQYRICENPPCP). A spacer region spans residues 794 to 917 (VIKGDFNHTR…PDNQSSKEPG (124 aa)). N-linked (GlcNAc...) asparagine glycans are attached at residues N800, N910, N931, N952, and N1012. TSP type-1 domains are found at residues 918 to 978 (PLFM…NEQP), 979 to 1040 (CQTR…QDCM), 1042 to 1086 (VWEA…EDCE), and 1090 to 1147 (KCYV…QPCN). 3 disulfide bridges follow: C991-C1034, C995-C1039, and C1006-C1023. The PLAC domain occupies 1163–1202 (LTFKCLGDQWPVYCRVIREKNLCQDMRWYQRCCETCRDFY).

The cofactor is Zn(2+). The precursor is cleaved by a furin endopeptidase. In terms of processing, glycosylated. Can be O-fucosylated by POFUT2 on a serine or a threonine residue found within the consensus sequence C1-X(2)-(S/T)-C2-G of the TSP type-1 repeat domains where C1 and C2 are the first and second cysteine residue of the repeat, respectively. Fucosylated repeats can then be further glycosylated by the addition of a beta-1,3-glucose residue by the glucosyltransferase, B3GALTL. Fucosylation mediates the efficient secretion of ADAMTS family members. Can also be C-glycosylated with one or two mannose molecules on tryptophan residues within the consensus sequence W-X-X-W of the TPRs, and N-glycosylated. These other glycosylations can also facilitate secretion. As to expression, expressed predominantly in fetal ovary, low levels of expression is also detected in kidney, heart, skeletal muscle, lung and testis.

The protein localises to the secreted. Its subcellular location is the extracellular space. It is found in the extracellular matrix. This chain is A disintegrin and metalloproteinase with thrombospondin motifs 19 (Adamts19), found in Mus musculus (Mouse).